The sequence spans 503 residues: uncharacterized protein (503 aa).

Residues 437 to 465 are a coiled coil; sequence LNKDLILENLIETENENDKQEFQKLLRTI.

The protein belongs to the IIV-6 467R family.

This is an uncharacterized protein from Invertebrate iridescent virus 6 (IIV-6).